The sequence spans 328 residues: Tryptophan--tRNA ligase (328 aa).

ATP-binding positions include 10–12 (QAT) and 18–19 (GN). Positions 11-19 (ATGSLHLGN) match the 'HIGH' region motif. Aspartate 134 contributes to the L-tryptophan binding site. ATP contacts are provided by residues 146-148 (GED), isoleucine 186, and 195-199 (KMSKS). The 'KMSKS' region signature appears at 195 to 199 (KMSKS).

This sequence belongs to the class-I aminoacyl-tRNA synthetase family. As to quaternary structure, homodimer.

It is found in the cytoplasm. It carries out the reaction tRNA(Trp) + L-tryptophan + ATP = L-tryptophyl-tRNA(Trp) + AMP + diphosphate + H(+). Catalyzes the attachment of tryptophan to tRNA(Trp). In Rickettsia bellii (strain RML369-C), this protein is Tryptophan--tRNA ligase.